The primary structure comprises 242 residues: Phosphoribosylaminoimidazole-succinocarboxamide synthase (242 aa).

The protein belongs to the SAICAR synthetase family.

The catalysed reaction is 5-amino-1-(5-phospho-D-ribosyl)imidazole-4-carboxylate + L-aspartate + ATP = (2S)-2-[5-amino-1-(5-phospho-beta-D-ribosyl)imidazole-4-carboxamido]succinate + ADP + phosphate + 2 H(+). It participates in purine metabolism; IMP biosynthesis via de novo pathway; 5-amino-1-(5-phospho-D-ribosyl)imidazole-4-carboxamide from 5-amino-1-(5-phospho-D-ribosyl)imidazole-4-carboxylate: step 1/2. In Magnetococcus marinus (strain ATCC BAA-1437 / JCM 17883 / MC-1), this protein is Phosphoribosylaminoimidazole-succinocarboxamide synthase.